The chain runs to 490 residues: MPRFSDQLLYIGGRYVPARGGHTFEVVNPATGEVLANVHNAGADDLDAAVDSAQAGQRQWAALTTVERSRILLRAVALLRERNDALAELETLNTGKPLSETRSVDVVTGADVLEYYAGVAQALQGAQVPLREGSFFYTRHEPLGVVGAIGAWNYPIQIALWKAAPALAAGNAMIFKPSEVTPLTALKLAEIFTEAGLPDGVFNVLPGDGASVGTALTEHPQIEKISFTGGTATGRKVMASASSSSLKEVTMELGGKSPLIVCADADLDLAADIAMMANFYSSGQVCTNGTRVFVPRALRHAFEARLLARVQRIHIGDPLDERTTFGPLVSAAHMQRVLEHIEQGKAEGARLLCGGERLQDGALAQGYYVAPTIFSDCTDVMTIVREEIFGPVLSLLTYDDEDEAVTRANATTYGLAAGVVTPDLARAHRLIHRLEAGICWVNTWGESPAPMPVGGYKQSGVGRENGLATLQAYTRTKSVQIELERYASVF.

N93 lines the K(+) pocket. 150–152 (GAW) provides a ligand contact to NAD(+). The Charge relay system role is filled by K162. An NAD(+)-binding site is contributed by 176–179 (KPSE). A K(+)-binding site is contributed by V180. 230-233 (GTAT) is a binding site for NAD(+). L246 contributes to the K(+) binding site. E252 serves as the catalytic Proton acceptor. NAD(+)-binding residues include G254, C286, and E387. The active-site Nucleophile is the C286. C286 is subject to Cysteine sulfenic acid (-SOH). K(+) contacts are provided by K457 and G460. E464 (charge relay system) is an active-site residue.

This sequence belongs to the aldehyde dehydrogenase family. As to quaternary structure, dimer of dimers. K(+) is required as a cofactor.

It carries out the reaction betaine aldehyde + NAD(+) + H2O = glycine betaine + NADH + 2 H(+). It functions in the pathway amine and polyamine biosynthesis; betaine biosynthesis via choline pathway; betaine from betaine aldehyde: step 1/1. Its function is as follows. Involved in the biosynthesis of the osmoprotectant glycine betaine. Catalyzes the irreversible oxidation of betaine aldehyde to the corresponding acid. The chain is Betaine aldehyde dehydrogenase from Xanthomonas euvesicatoria pv. vesicatoria (strain 85-10) (Xanthomonas campestris pv. vesicatoria).